The following is a 213-amino-acid chain: Kynurenine formamidase (213 aa).

Residue Trp20 coordinates substrate. Zn(2+) contacts are provided by His50, His54, and Asp56. His60 functions as the Proton donor/acceptor in the catalytic mechanism. Residues His161 and Glu173 each coordinate Zn(2+).

It belongs to the Cyclase 1 superfamily. KynB family. As to quaternary structure, homodimer. Zn(2+) is required as a cofactor.

It carries out the reaction N-formyl-L-kynurenine + H2O = L-kynurenine + formate + H(+). It participates in amino-acid degradation; L-tryptophan degradation via kynurenine pathway; L-kynurenine from L-tryptophan: step 2/2. Its function is as follows. Catalyzes the hydrolysis of N-formyl-L-kynurenine to L-kynurenine, the second step in the kynurenine pathway of tryptophan degradation. The chain is Kynurenine formamidase from Pseudomonas aeruginosa (strain UCBPP-PA14).